A 124-amino-acid chain; its full sequence is MAAVLTFLRFLGRGGAVTRGLPGGARCFGVRTSPTGEKVTHTGQVYDDGDYRKVRFVGRQKEVNENFAIDLIAEQPVSQVGSRVISCDGGGGALGHPRVYINLDKETKTGTCGYCGLQFRQQHH.

Residues 1–28 (MAAVLTFLRFLGRGGAVTRGLPGGARCF) constitute a mitochondrion transit peptide.

This sequence belongs to the complex I NDUFS6 subunit family. As to quaternary structure, mammalian complex I is composed of 45 different subunits. This is a component of the iron-sulfur (IP) fragment of the enzyme.

Its subcellular location is the mitochondrion inner membrane. Accessory subunit of the mitochondrial membrane respiratory chain NADH dehydrogenase (Complex I), that is believed not to be involved in catalysis. Complex I functions in the transfer of electrons from NADH to the respiratory chain. The immediate electron acceptor for the enzyme is believed to be ubiquinone. The protein is NADH dehydrogenase [ubiquinone] iron-sulfur protein 6, mitochondrial (NDUFS6) of Bos taurus (Bovine).